Here is a 189-residue protein sequence, read N- to C-terminus: Interferon alpha-6 (189 aa).

The signal sequence occupies residues 1 to 23; the sequence is MARLCAFLMVLAVLSYWPTCSLG. Disulfide bonds link Cys24–Cys122 and Cys52–Cys162. A glycan (N-linked (GlcNAc...) asparagine) is linked at Asn101.

The protein belongs to the alpha/beta interferon family.

It is found in the secreted. Produced by macrophages, IFN-alpha have antiviral activities. Interferon stimulates the production of two enzymes: a protein kinase and an oligoadenylate synthetase. This chain is Interferon alpha-6 (Ifna6), found in Mus musculus (Mouse).